Consider the following 1235-residue polypeptide: MASPPDTDGFSDVRKVGYLRKPKSMHKRFFVLRAASEAGGPARLEYYENEKKWRHKSSAPKRSIPLESCFNINKRADSKNKHLVALYTRDEHFAIAADSEAEQDSWYQALLQLHNRAKAHHDGAGGGCGGSCSGSSGVGEAGEDLSYDTGPGPAFKEVWQVILKPKGLGQTKNLIGIYRLCLTSKTISFVKLNSEAAAVVLQLMNIRRCGHSENFFFIEVGRSAVTGPGEFWMQVDDSVVAQNMHETILEAMRAMSDEFRPRTKSQSSSSCSNPISVPLRRHHLNNPPPSQVGLTRRSRTESITATSPASMVGGKPGSFRVRASSDGEGTMSRPASVDGSPVSPSTNRTHAHRHRGSSRLHPPLNHSRSIPMPSSRCSPSATSPVSLSSSSTSGHGSTSDCLFPRRSSASVSGSPSDGGFISSDEYGSSPCDFRSSFRSVTPDSLGHTPPARGEEELSNYICMGGKGASTLTAPNGHYILSRGGNGHRYIPGATMGTSPALTGDEAAGAADLDNRFRKRTHSAGTSPTISHQKTPSQSSVVSIEEYTEMMPAAYPPGGGSGGRLPGYRHSAFVPTHSYPEEGLEMHHLERRGGHHRPDSSNLHTDDGYMPMSPGVAPVPSNRKGNGDYMPMSPKSVSAPQQIINPIRRHPQRVDPNGYMMMSPSGSCSPDIGGGSCSSSSISAAPSGSSYGKPWTNGVGGHHTHALPHAKPPVESGGGKLLPCTGDYMNMSPVGDSNTSSPSECYYGPEDPQHKPVLSYYSLPRSFKHTQRPGEPEEGARHQHLRLSSSSGRLRYTATAEDSSSSTSSDSLGGGYCGARPESSVTHPHHHALQPHLPRKVDTAAQTNSRLARPTRLSLGDPKASTLPRVREQQQQQQQQQQSSLHPPEPKSPGEYVNIEFGSGQPGYLAGPATSRSSPSVRCLPQLHPAPREETGSEEYMNMDLGPGRRATWQESGGVELGRVGPAPPGAASICRPTRSVPNSRGDYMTMQIGCPRQSYVDTSPVAPVSYADMRTGIAAEKVSLPRTTGAAPPPSSTASASASVTPQGAAEQAAHSSLLGGPQGPGGMSAFTRVNLSPNHNQSAKVIRADTQGCRRRHSSETFSAPTRAANTVSFGAGAAGGGSGGGSEDVKRHSSASFENVWLRPGDLGGASKESAPGCGAAGGLEKSLNYIDLDLVKDVKQHPQDCPSQQQSLPPPPPHQPLGSNEGSSPRRSSEDLSTYASINFQKQPEDRQ.

S3 is subject to Phosphoserine. The mediates interaction with PHIP stretch occupies residues 3–133 (SPPDTDGFSD…AGGGCGGSCS (131 aa)). The 104-residue stretch at 12–115 (DVRKVGYLRK…WYQALLQLHN (104 aa)) folds into the PH domain. S99 is subject to Phosphoserine; by CK2. One can recognise an IRS-type PTB domain in the interval 155–259 (FKEVWQVILK…EAMRAMSDEF (105 aa)). The segment at 258–425 (EFRPRTKSQS…SDGGFISSDE (168 aa)) is disordered. Phosphoserine; by RPS6KB1 occurs at positions 265 and 302. Residues 265 to 276 (SQSSSSCSNPIS) are compositionally biased toward low complexity. A Phosphoserine; by IKKB, MAPK8 and RPS6KB1 modification is found at S307. 4 positions are modified to phosphoserine: S318, S325, S340, and S343. Residues 349 to 358 (THAHRHRGSS) show a composition bias toward basic residues. Composition is skewed to low complexity over residues 378 to 399 (SPSATSPVSLSSSSTSGHGSTS) and 407 to 419 (SSASVSGSPSDGG). S414 bears the Phosphoserine mark. A phosphothreonine mark is found at T441 and T448. Y460 is modified (phosphotyrosine; by INSR). A YXXM motif 1 motif is present at residues 460-463 (YICM). T502 is subject to Phosphothreonine; by CK2. The tract at residues 520–539 (THSAGTSPTISHQKTPSQSS) is disordered. S522 bears the Phosphoserine; by RPS6KB1 mark. Polar residues predominate over residues 522 to 539 (SAGTSPTISHQKTPSQSS). 2 consecutive short sequence motifs (YXXM motif) follow at residues 546–549 (YTEM) and 608–611 (YMPM). Y608 is subject to Phosphotyrosine; by INSR. S612 carries the phosphoserine modification. Y628 is subject to Phosphotyrosine; by INSR. The YXXM motif 4 signature appears at 628 to 631 (YMPM). At S632 the chain carries Phosphoserine; by RPS6KB1 and ROCK2. The residue at position 658 (Y658) is a Phosphotyrosine. Residues 658 to 661 (YMMM) carry the YXXM motif 5 motif. The span at 669–689 (PDIGGGSCSSSSISAAPSGSS) shows a compositional bias: low complexity. The tract at residues 669–720 (PDIGGGSCSSSSISAAPSGSSYGKPWTNGVGGHHTHALPHAKPPVESGGGKL) is disordered. Positions 727–730 (YMNM) match the YXXM motif 6 motif. Residues 766–921 (FKHTQRPGEP…ATSRSSPSVR (156 aa)) form a disordered region. Basic and acidic residues predominate over residues 771 to 780 (RPGEPEEGAR). Composition is skewed to low complexity over residues 785 to 794 (RLSSSSGRLR), 801 to 810 (DSSSSTSSDS), and 872 to 881 (QQQQQQQQQQ). The residue at position 789 (S789) is a Phosphoserine; by AMPK and SIK2. A Phosphoserine modification is found at S891. Phosphotyrosine; by INSR occurs at positions 895, 939, and 987. Residues 895–897 (YVN) are GRB2-binding. 3 consecutive short sequence motifs (YXXM motif) follow at residues 939–942 (YMNM), 987–990 (YMTM), and 1010–1013 (YADM). Residues 1024-1165 (LPRTTGAAPP…SAPGCGAAGG (142 aa)) form a disordered region. Positions 1025 to 1046 (PRTTGAAPPPSSTASASASVTP) are enriched in low complexity. A compositionally biased stretch (polar residues) spans 1072–1084 (TRVNLSPNHNQSA). The residue at position 1099 (S1099) is a Phosphoserine. The residue at position 1100 (S1100) is a Phosphoserine; by RPS6KB1. Residues 1101 to 1114 (ETFSAPTRAANTVS) are compositionally biased toward polar residues. Gly residues predominate over residues 1118–1128 (GAAGGGSGGGS). Y1172 is subject to Phosphotyrosine; by INSR. The interval 1177 to 1235 (LVKDVKQHPQDCPSQQQSLPPPPPHQPLGSNEGSSPRRSSEDLSTYASINFQKQPEDRQ) is disordered. A Glycyl lysine isopeptide (Lys-Gly) (interchain with G-Cter in ubiquitin) cross-link involves residue K1179. Polar residues predominate over residues 1204–1229 (LGSNEGSSPRRSSEDLSTYASINFQK). The residue at position 1222 (Y1222) is a Phosphotyrosine; by INSR.

Interacts with SOCS7. Interacts (via IRS-type PTB domain) with IGF1R and INSR (via the tyrosine-phosphorylated NPXY motif). Interacts with UBTF, FER and PIK3CA. Interacts (via phosphorylated YXXM motifs) with PIK3R1. Interacts with ROCK1. Interacts (via PH domain) with PHIP. Interacts with GRB2. Interacts with ALK. Interacts with EIF2AK2/PKR. Interacts with GKAP1. Interacts with DGKZ in the absence of insulin; insulin stimulation decreases this interaction. Found in a ternary complex with DGKZ and PIP5K1A in the absence of insulin stimulation. Interacts with SQSTM1; the interaction is disrupted by the presence of tensin TNS2. Interacts with NCK1 (via SH2 domain). Interacts with NCK2 (via SH3 domain). Interacts with SH2B1; this interaction enhances leptin-induced activation of the PI3-kinase pathway. Interacts with DVL2; this interaction promotes the Wnt/beta-catenin signaling pathway. Interacts with JAK1. Serine phosphorylation of IRS1 is a mechanism for insulin resistance. Ser-307 phosphorylation inhibits insulin action through disruption of IRS1 interaction with the insulin receptor, and Ser-789 phosphorylation is increased in the liver of insulin-resistant rats. Phosphorylation of Tyr-895 is required for GRB2-binding. Phosphorylated by ALK. Phosphorylated at Ser-265, Ser-302, Ser-632 and Ser-1100 by RPS6KB1; phosphorylation induces accelerated degradation of IRS1. Phosphorylated on tyrosine residues in response to insulin. In skeletal muscles, dephosphorylated on Tyr-608 by TNS2 under anabolic conditions; dephosphorylation results in the proteasomal degradation of IRS1. Post-translationally, ubiquitinated by the Cul7-RING(FBXW8) complex in a mTOR-dependent manner, leading to its degradation: the Cul7-RING(FBXW8) complex recognizes and binds IRS1 previously phosphorylated by S6 kinase (RPS6KB1 or RPS6KB2). Ubiquitinated by TRAF4 through 'Lys-29' linkage; this ubiquitination regulates the interaction of IRS1 with IGFR and IRS1 tyrosine phosphorylation upon IGF1 stimulation. In terms of processing, S-nitrosylation at by BLVRB inhibits its activity.

It is found in the cytoplasm. It localises to the nucleus. Functionally, signaling adapter protein that participates in the signal transduction from two prominent receptor tyrosine kinases, insulin receptor/INSR and insulin-like growth factor I receptor/IGF1R. Plays therefore an important role in development, growth, glucose homeostasis as well as lipid metabolism. Upon phosphorylation by the insulin receptor, functions as a signaling scaffold that propagates insulin action through binding to SH2 domain-containing proteins including the p85 regulatory subunit of PI3K, NCK1, NCK2, GRB2 or SHP2. Recruitment of GRB2 leads to the activation of the guanine nucleotide exchange factor SOS1 which in turn triggers the Ras/Raf/MEK/MAPK signaling cascade. Activation of the PI3K/AKT pathway is responsible for most of insulin metabolic effects in the cell, and the Ras/Raf/MEK/MAPK is involved in the regulation of gene expression and in cooperation with the PI3K pathway regulates cell growth and differentiation. Acts a positive regulator of the Wnt/beta-catenin signaling pathway through suppression of DVL2 autophagy-mediated degradation leading to cell proliferation. The protein is Insulin receptor substrate 1 (Irs1) of Rattus norvegicus (Rat).